The following is a 380-amino-acid chain: Succinyl-diaminopimelate desuccinylase (380 aa).

Histidine 71 contributes to the Zn(2+) binding site. Residue aspartate 73 is part of the active site. Position 104 (aspartate 104) interacts with Zn(2+). Catalysis depends on glutamate 136, which acts as the Proton acceptor. Residues glutamate 137, glutamate 166, and histidine 351 each contribute to the Zn(2+) site.

The protein belongs to the peptidase M20A family. DapE subfamily. Homodimer. It depends on Zn(2+) as a cofactor. Requires Co(2+) as cofactor.

It carries out the reaction N-succinyl-(2S,6S)-2,6-diaminopimelate + H2O = (2S,6S)-2,6-diaminopimelate + succinate. The protein operates within amino-acid biosynthesis; L-lysine biosynthesis via DAP pathway; LL-2,6-diaminopimelate from (S)-tetrahydrodipicolinate (succinylase route): step 3/3. Functionally, catalyzes the hydrolysis of N-succinyl-L,L-diaminopimelic acid (SDAP), forming succinate and LL-2,6-diaminopimelate (DAP), an intermediate involved in the bacterial biosynthesis of lysine and meso-diaminopimelic acid, an essential component of bacterial cell walls. The chain is Succinyl-diaminopimelate desuccinylase from Ehrlichia canis (strain Jake).